Reading from the N-terminus, the 544-residue chain is Transcription factor bHLH119 (544 aa).

Disordered regions lie at residues N12 to R59 and V185 to V208. Polar residues predominate over residues V15–P29. The segment covering L50–R59 has biased composition (pro residues). The residue at position 269 (T269) is a Phosphothreonine. S274 is subject to Phosphoserine. Disordered stretches follow at residues Q342 to L364 and Q522 to K544. The 50-residue stretch at R357–L406 folds into the bHLH domain. Low complexity predominate over residues Q522–P535. Phosphoserine occurs at positions 541 and 543.

In terms of assembly, homodimer.

The protein resides in the nucleus. This is Transcription factor bHLH119 (BHLH119) from Arabidopsis thaliana (Mouse-ear cress).